We begin with the raw amino-acid sequence, 270 residues long: GTP cyclohydrolase FolE2 2 (270 aa).

Belongs to the GTP cyclohydrolase IV family.

The enzyme catalyses GTP + H2O = 7,8-dihydroneopterin 3'-triphosphate + formate + H(+). It participates in cofactor biosynthesis; 7,8-dihydroneopterin triphosphate biosynthesis; 7,8-dihydroneopterin triphosphate from GTP: step 1/1. Its function is as follows. Converts GTP to 7,8-dihydroneopterin triphosphate. In Dechloromonas aromatica (strain RCB), this protein is GTP cyclohydrolase FolE2 2.